Consider the following 795-residue polypeptide: Lon protease (795 aa).

A Lon N-terminal domain is found at 17-214 (YPLMPLRDIV…KVYKFLQDEI (198 aa)). ATP is bound at residue 370–377 (GPPGVGKT). One can recognise a Lon proteolytic domain in the interval 605–787 (KPLVGVATGL…EEVFKIALVR (183 aa)). Catalysis depends on residues Ser-692 and Lys-735.

The protein belongs to the peptidase S16 family. Homohexamer. Organized in a ring with a central cavity.

Its subcellular location is the cytoplasm. It carries out the reaction Hydrolysis of proteins in presence of ATP.. Functionally, ATP-dependent serine protease that mediates the selective degradation of mutant and abnormal proteins as well as certain short-lived regulatory proteins. Required for cellular homeostasis and for survival from DNA damage and developmental changes induced by stress. Degrades polypeptides processively to yield small peptide fragments that are 5 to 10 amino acids long. Binds to DNA in a double-stranded, site-specific manner. The polypeptide is Lon protease (Aquifex aeolicus (strain VF5)).